We begin with the raw amino-acid sequence, 370 residues long: StAR-related lipid transfer protein 7, mitochondrial (370 aa).

The N-terminal 58 residues, 1–58, are a transit peptide targeting the mitochondrion; sequence MLPRRLLAAWLAGTRGGGLLALLANQCRFVTGLRVRRAQQIAQLYGRLYSESSRRVLL. A coiled-coil region spans residues 86–111; the sequence is DEERIQEEELQRSINEMKRLEEMSNM. 2 disordered regions span residues 111-138 and 343-370; these read MFQS…EGKE and MSSE…IEYA. The START domain maps to 112–327; that stretch reads FQSSGVQHHP…LHMATLKAKN (216 aa).

In terms of processing, proteolytically cleaved by PARL. In terms of tissue distribution, expressed in nasal epithelial cells. Down-regulated in nasal epithelial cells in patients experiencing an asthma exacerbation as compared to stable asthmatics and healthy controls.

The protein resides in the mitochondrion. Its function is as follows. May play a protective role in mucosal tissues by preventing exaggerated allergic responses. This is StAR-related lipid transfer protein 7, mitochondrial (STARD7) from Homo sapiens (Human).